Here is a 514-residue protein sequence, read N- to C-terminus: ATP synthase subunit alpha (514 aa).

170 to 177 (GDRQIGKT) is a binding site for ATP.

This sequence belongs to the ATPase alpha/beta chains family. As to quaternary structure, F-type ATPases have 2 components, CF(1) - the catalytic core - and CF(0) - the membrane proton channel. CF(1) has five subunits: alpha(3), beta(3), gamma(1), delta(1), epsilon(1). CF(0) has three main subunits: a(1), b(2) and c(9-12). The alpha and beta chains form an alternating ring which encloses part of the gamma chain. CF(1) is attached to CF(0) by a central stalk formed by the gamma and epsilon chains, while a peripheral stalk is formed by the delta and b chains.

It localises to the cell inner membrane. The catalysed reaction is ATP + H2O + 4 H(+)(in) = ADP + phosphate + 5 H(+)(out). Its function is as follows. Produces ATP from ADP in the presence of a proton gradient across the membrane. The alpha chain is a regulatory subunit. The polypeptide is ATP synthase subunit alpha (Pseudomonas putida (strain ATCC 700007 / DSM 6899 / JCM 31910 / BCRC 17059 / LMG 24140 / F1)).